The chain runs to 316 residues: Adenine deaminase (316 aa).

3 residues coordinate Zn(2+): His-14, His-16, and His-194. Glu-197 serves as the catalytic Proton donor. Asp-275 lines the Zn(2+) pocket. Asp-276 serves as a coordination point for substrate.

It belongs to the metallo-dependent hydrolases superfamily. Adenosine and AMP deaminases family. Adenine deaminase type 2 subfamily. Zn(2+) serves as cofactor.

It catalyses the reaction adenine + H2O + H(+) = hypoxanthine + NH4(+). Its function is as follows. Catalyzes the hydrolytic deamination of adenine to hypoxanthine. Plays an important role in the purine salvage pathway and in nitrogen catabolism. This Pseudomonas aeruginosa (strain LESB58) protein is Adenine deaminase.